The sequence spans 400 residues: Nicotinate phosphoribosyltransferase (400 aa).

Position 220 is a phosphohistidine; by autocatalysis (His220).

This sequence belongs to the NAPRTase family. In terms of processing, transiently phosphorylated on a His residue during the reaction cycle. Phosphorylation strongly increases the affinity for substrates and increases the rate of nicotinate D-ribonucleotide production. Dephosphorylation regenerates the low-affinity form of the enzyme, leading to product release.

The enzyme catalyses nicotinate + 5-phospho-alpha-D-ribose 1-diphosphate + ATP + H2O = nicotinate beta-D-ribonucleotide + ADP + phosphate + diphosphate. It participates in cofactor biosynthesis; NAD(+) biosynthesis; nicotinate D-ribonucleotide from nicotinate: step 1/1. In terms of biological role, catalyzes the synthesis of beta-nicotinate D-ribonucleotide from nicotinate and 5-phospho-D-ribose 1-phosphate at the expense of ATP. In Salmonella choleraesuis (strain SC-B67), this protein is Nicotinate phosphoribosyltransferase.